Consider the following 243-residue polypeptide: Uridylate kinase (243 aa).

15–18 serves as a coordination point for ATP; that stretch reads KLSG. G56 provides a ligand contact to UMP. ATP-binding residues include G57 and R61. Residue 138–145 participates in UMP binding; the sequence is TGNPYFST. The ATP site is built by N166, Y172, and D175.

The protein belongs to the UMP kinase family. Homohexamer.

It is found in the cytoplasm. It carries out the reaction UMP + ATP = UDP + ADP. It participates in pyrimidine metabolism; CTP biosynthesis via de novo pathway; UDP from UMP (UMPK route): step 1/1. Its activity is regulated as follows. Inhibited by UTP. In terms of biological role, catalyzes the reversible phosphorylation of UMP to UDP. The chain is Uridylate kinase from Mycoplasma genitalium (strain ATCC 33530 / DSM 19775 / NCTC 10195 / G37) (Mycoplasmoides genitalium).